A 296-amino-acid polypeptide reads, in one-letter code: MQDRFLKSIAKLPEPLATAIVPLLDKDFAGHIDAQQLAELQAASKMELNELLLALLPIAAALARPPISQFHVGAIAKGKSGDIYMGANIELPGEALFHSVHAEQSAISHAWLSGESIIEDIIVNASPCGHCRQFINELVDGGKVNIHLPDQATAPLSHYLPYAFGPSDLDVTEPLLSKQQQTLTLDSNDPMIIEGLDHAGLSYAPYTKAYASVVLETKDGATYCGRYAENAAFNPSMQPMQMALSTMARHNRDFSEINRAVLIESSKGVISLVGAAMDALHSVAAVELEHIVVEPE.

2 consecutive CMP/dCMP-type deaminase domains span residues 47–167 (ELNE…FGPS) and 186–296 (DSND…VEPE). Residue 88–90 (NIE) coordinates substrate. Residue His-101 participates in Zn(2+) binding. The Proton donor role is filled by Glu-103. Zn(2+) contacts are provided by Cys-128 and Cys-131.

This sequence belongs to the cytidine and deoxycytidylate deaminase family. Homodimer. It depends on Zn(2+) as a cofactor.

It catalyses the reaction cytidine + H2O + H(+) = uridine + NH4(+). The catalysed reaction is 2'-deoxycytidine + H2O + H(+) = 2'-deoxyuridine + NH4(+). In terms of biological role, this enzyme scavenges exogenous and endogenous cytidine and 2'-deoxycytidine for UMP synthesis. The sequence is that of Cytidine deaminase from Shewanella pealeana (strain ATCC 700345 / ANG-SQ1).